The primary structure comprises 33 residues: Gaegurin-1 (33 aa).

Cysteine 27 and cysteine 33 form a disulfide bridge.

The protein belongs to the frog skin active peptide (FSAP) family. Brevinin subfamily. In terms of assembly, monomer. In terms of tissue distribution, expressed by the skin glands.

It is found in the secreted. Its function is as follows. Has a non-hemolytic activity. Has a broad spectrum of activity against both Gram-positive and Gram-negative bacteria, fungi and protozoa. This Glandirana rugosa (Japanese wrinkled frog) protein is Gaegurin-1 (GGN1).